An 895-amino-acid polypeptide reads, in one-letter code: Plasma membrane ATPase 1 (895 aa).

Residues 1–53 (MSATEPTNEKVDKIVSDDEDEDIDQLVADLQSNPGAGDEEEEEENDSSFKAVP) form a disordered region. Residues 1-92 (MSATEPTNEK…AEEQENLVLK (92 aa)) lie on the Cytoplasmic side of the membrane. Basic and acidic residues predominate over residues 7–16 (TNEKVDKIVS). Residues 37–46 (GDEEEEEEND) show a composition bias toward acidic residues. A helical membrane pass occupies residues 93-113 (FVMFFVGPIQFVMEAAAVLAA). At 114 to 117 (GLED) the chain is on the extracellular side. The chain crosses the membrane as a helical span at residues 118-137 (WVDFGVICALLLLNAFVGFI). The Cytoplasmic segment spans residues 138–268 (QEYQAGSIVD…GTGHFTEVLN (131 aa)). A helical membrane pass occupies residues 269–290 (GIGTTLLVFVIVTLLVVWVACF). Residues 291 to 301 (YRTVRIVPILR) lie on the Extracellular side of the membrane. A helical transmembrane segment spans residues 302–324 (YTLAITIIGVPVGLPAVVTTTMA). The Cytoplasmic segment spans residues 325 to 696 (VGAAYLAKKQ…IAILNRSLDI (372 aa)). The active-site 4-aspartylphosphate intermediate is Asp-355. 2 residues coordinate Mg(2+): Asp-611 and Asp-615. A helical membrane pass occupies residues 697 to 715 (NLIVFIAIFADVATLAIAY). At 716 to 731 (DNAPYDPKPVKWNLPR) the chain is on the extracellular side. A helical membrane pass occupies residues 732 to 751 (LWGMSIVLGIILAIGTWITL). Residues 752–801 (TTMLLPKGGIIQNFGGLDGILFLQISLTENWLIFVTRAQGPFWSSIPSWQ) lie on the Cytoplasmic side of the membrane. A helical membrane pass occupies residues 802–822 (LSGAVLIVDIIATCFTLFGWW). At 823–834 (SQNWTDIVTVVR) the chain is on the extracellular side. The helical transmembrane segment at 835–851 (TWIWSFGVFCVMGGAYY) threads the bilayer. At 852-895 (LMSTSEAFDNFCNGRKPQQHTDKRSLEDFLVSMQRVSTQHEKST) the chain is on the cytoplasmic side.

The protein belongs to the cation transport ATPase (P-type) (TC 3.A.3) family. Type IIIA subfamily.

The protein resides in the cell membrane. It catalyses the reaction ATP + H2O + H(+)(in) = ADP + phosphate + 2 H(+)(out). Its function is as follows. The plasma membrane ATPase of plants and fungi is a hydrogen ion pump. The proton gradient it generates drives the active transport of nutrients by H(+)-symport. The resulting external acidification and/or internal alkinization may mediate growth responses. This Candida albicans (Yeast) protein is Plasma membrane ATPase 1 (PMA1).